Consider the following 143-residue polypeptide: Actinoxanthin (143 aa).

A signal peptide spans 1–33; the sequence is MSLRHMSRRASRFGVVAVASIGLAAAAQSVAFA. Intrachain disulfides connect Cys69/Cys78 and Cys119/Cys124.

It belongs to the neocarzinostatin family.

In terms of biological role, binds non-covalently to a chromophore which is the cytotoxic and mutagenic component of the antibiotic. The chromophore binds to DNA as a weak intercalator and causes single- and double-strand breaks. This is Actinoxanthin (axnA) from Streptomyces globisporus.